The primary structure comprises 458 residues: tRNA(Ile)-lysidine synthase (458 aa).

35–40 contributes to the ATP binding site; sequence SGGVDS.

This sequence belongs to the tRNA(Ile)-lysidine synthase family.

Its subcellular location is the cytoplasm. The catalysed reaction is cytidine(34) in tRNA(Ile2) + L-lysine + ATP = lysidine(34) in tRNA(Ile2) + AMP + diphosphate + H(+). In terms of biological role, ligates lysine onto the cytidine present at position 34 of the AUA codon-specific tRNA(Ile) that contains the anticodon CAU, in an ATP-dependent manner. Cytidine is converted to lysidine, thus changing the amino acid specificity of the tRNA from methionine to isoleucine. The chain is tRNA(Ile)-lysidine synthase from Nitrosomonas europaea (strain ATCC 19718 / CIP 103999 / KCTC 2705 / NBRC 14298).